The sequence spans 720 residues: Biotin biosynthesis bifunctional protein BioWF (720 aa).

Residues 1–39 form a disordered region; sequence MRFSIKMRASARVSSSPSTSDGSSGDHTESRDRADRHIS. Positions 8 to 23 are enriched in low complexity; that stretch reads RASARVSSSPSTSDGS. Positions 24–39 are enriched in basic and acidic residues; it reads SGDHTESRDRADRHIS. Arginine 314 contributes to the substrate binding site. Residue 401–402 participates in pyridoxal 5'-phosphate binding; it reads GY. Histidine 439 is a substrate binding site. Pyridoxal 5'-phosphate is bound by residues serine 488, 513 to 516, and 564 to 567; these read DDAH and TASK. N6-(pyridoxal phosphate)lysine is present on lysine 567. Position 684 (threonine 684) interacts with substrate.

This sequence in the N-terminal section; belongs to the BioW family. In the C-terminal section; belongs to the class-II pyridoxal-phosphate-dependent aminotransferase family. BioF subfamily. Homodimer. Requires Mg(2+) as cofactor. Pyridoxal 5'-phosphate is required as a cofactor.

It carries out the reaction heptanedioate + ATP + CoA = 6-carboxyhexanoyl-CoA + AMP + diphosphate. The enzyme catalyses 6-carboxyhexanoyl-[ACP] + L-alanine + H(+) = (8S)-8-amino-7-oxononanoate + holo-[ACP] + CO2. The protein operates within metabolic intermediate metabolism; pimeloyl-CoA biosynthesis; pimeloyl-CoA from pimelate: step 1/1. It participates in cofactor biosynthesis; biotin biosynthesis. Functionally, catalyzes both the decarboxylative condensation of pimeloyl-[acyl-carrier protein] and L-alanine to produce 8-amino-7-oxononanoate (AON), [acyl-carrier protein], and carbon dioxide, and the transformation of pimelate into pimeloyl-CoA with concomitant hydrolysis of ATP to AMP. The sequence is that of Biotin biosynthesis bifunctional protein BioWF (bioWF) from Corynebacterium kroppenstedtii (strain DSM 44385 / JCM 11950 / CIP 105744 / CCUG 35717).